Consider the following 80-residue polypeptide: Protein transport protein SSS1 (80 aa).

Topologically, residues 1 to 46 (MARASEKGEEKKQSNNQVEKLVEAPVEFVREGTQFLAKCKKPDLKE) are cytoplasmic. The chain crosses the membrane as a helical span at residues 47 to 75 (YTKIVKAVGIGFIAVGIIGYAIKLIHIPI). Residues 76 to 80 (RYVIV) lie on the Extracellular side of the membrane.

This sequence belongs to the SecE/SEC61-gamma family. In terms of assembly, component of the heterotrimeric Sec61 complex, which is composed of SSH1, SBH1 and SSS1. Presumably three to four Sec61 heterotrimers assemble into an oligomeric ring with a central aqueous pore. In cotranslational ER import, the pore diameter varies from 9-15 A in a ribosome-free resting state to 40-60 A in a functional state when associated with the ribosome. The Sec61 complex is part of a channel-forming translocon complex whose composition seem to change dependent upon different functional states. During post-translational ER import the Sec61 complex associates with the Sec62/63 complex to form the Sec complex. SSH1 is a component of the heterotrimeric Ssh1 complex, which is composed of SSH1, SBH2 and SSS1. SSS1 interacts with OST1, OST4, SWP1 and WBP1, components of the OT complex.

It localises to the endoplasmic reticulum membrane. Functionally, part of the Sec61 complex, which is the major component of channel-forming translocon complex that mediates protein translocation across the endoplasmic reticulum (ER). The functional states of the translocon complex include co- and post-translational ER import, cotranslational membrane protein integration and retrograde transport of misfolded proteins out of the ER. In the cotranslational pathway, ribosomes synthesizing presecretory proteins are targeted to the translocon by the cytosolic signal recognition particle (SRP) and its ER-localized receptor. The association of the Sec61 complex with the ribosome is mediated by the 28S rRNA of the large ribosomal subunit. SRP-independent post-translational translocation requires the association of additional factors, such as the Sec62/63 complex and KAR2. Also part of the Ssh1 complex, which probably is the major component of a channel-forming translocon complex that may function exclusively in the cotranslational pathway of protein ER import. In Saccharomyces cerevisiae (strain ATCC 204508 / S288c) (Baker's yeast), this protein is Protein transport protein SSS1 (SSS1).